The chain runs to 672 residues: Outer dynein arm-docking complex subunit 4 (672 aa).

8 TPR repeats span residues Phe13–Asp46, Asn48–Phe80, Cys81–Arg114, Leu275–Glu311, Gly320–Tyr353, Ser360–Thr393, Thr397–Glu430, and Leu437–Val470. Residues Arg527 to Asp544 are compositionally biased toward basic and acidic residues. Residues Arg527 to Glu672 are disordered. Positions Glu545–Phe555 are enriched in acidic residues. Basic and acidic residues-rich tracts occupy residues Glu595 to Gly650 and Gly658 to Glu672.

As to quaternary structure, component of the outer dynein arm-docking complex along with ODAD1, ODAD2 and ODAD3. Interacts with ODAD1; this interaction may facilitate the recruitment and/or attachment of outer dynein arm docking complex proteins, including ODAD1, ODAD3 and ODAD2, to ciliary axonemes. Interacts with components of the IFT complex A, including IFT140, TTC21B/IFT139 and WDR19/IFT144, and the IFT complex B, including IFT46, IFT52 and IFT57. Interacts with CFAP53. In terms of tissue distribution, expressed in the nasal mucosa (at protein level).

The protein localises to the cytoplasm. It localises to the cytoskeleton. The protein resides in the cilium axoneme. Functionally, component of the outer dynein arm-docking complex (ODA-DC) that mediates outer dynein arms (ODA) binding onto the doublet microtubule. Plays an essential role for the assembly of ODA-DC and for the docking of ODA in ciliary axoneme. The polypeptide is Outer dynein arm-docking complex subunit 4 (Homo sapiens (Human)).